The sequence spans 216 residues: MFNEVHSIHGHTLLLITKSSLQATALLQHLKQSLAITGKLHNIQRSLDDISSGSIILLDMMEADKKLIHYWQDTLSRKNNNIKILLLNTPEDYPYRDIENWPHINGVFYSMEDQERVVNGLQGVLRGECYFTQKLASYLITHSGNYRYNSTESALLTHREKEILNKLRIGASNNEIARSLFISENTVKTHLYNLFKKIAVKNRTQAVSWANDNLRR.

The 66-residue stretch at Asn149–Leu214 folds into the HTH luxR-type domain. Residues Asn173–Tyr192 constitute a DNA-binding region (H-T-H motif).

The protein resides in the cell inner membrane. The master regulator for adhesive curli fimbriae expression; necessary for transcription of the csgBAC/ymdA operon. Plays a positive role in biofilm formation. May have the capability to respond to starvation and/or high cell density by activating csgBA transcription. Low-level constitutive expression confers an adherent curli fimbriae-expressing phenotype, up-regulates 10 genes and down-regulates 14 others. The polypeptide is CsgBAC operon transcriptional regulatory protein (csgD) (Escherichia coli (strain K12)).